Reading from the N-terminus, the 159-residue chain is MQCPTCQNTDSRVLESRSADSGKSVRRRRECLNCSFRFTTYERVETMPVSVLKKDGGRELFDKQKLFTGISRACEKTNFSSEEIINFVDGIESQIVQDSNKDIKSSHIGELILKNLRKENEVAYIRYASVYRKFNGVKDFISTLESLKGSSKNQLASIS.

Residues 1 to 11 (MQCPTCQNTDS) show a composition bias toward polar residues. Residues 1–21 (MQCPTCQNTDSRVLESRSADS) form a disordered region. Residues 3 to 34 (CPTCQNTDSRVLESRSADSGKSVRRRRECLNC) fold into a zinc finger. The region spanning 49 to 139 (VSVLKKDGGR…VYRKFNGVKD (91 aa)) is the ATP-cone domain.

The protein belongs to the NrdR family. Zn(2+) is required as a cofactor.

Negatively regulates transcription of bacterial ribonucleotide reductase nrd genes and operons by binding to NrdR-boxes. This Prochlorococcus marinus (strain AS9601) protein is Transcriptional repressor NrdR.